The following is a 238-amino-acid chain: Heme oxygenase (238 aa).

Residue histidine 17 participates in heme b binding.

This sequence belongs to the heme oxygenase family.

The protein localises to the plastid. It is found in the chloroplast. The catalysed reaction is heme b + 3 reduced [NADPH--hemoprotein reductase] + 3 O2 = biliverdin IXalpha + CO + Fe(2+) + 3 oxidized [NADPH--hemoprotein reductase] + 3 H2O + H(+). In terms of biological role, catalyzes the opening of the heme ring with the release of iron. Key enzyme in the synthesis of the chromophoric part of the photosynthetic antennae. This is Heme oxygenase (pbsA) from Pyropia yezoensis (Susabi-nori).